The primary structure comprises 1110 residues: Serine/threonine-protein kinase PknK (1110 aa).

The Protein kinase domain occupies 26–283 (FDNVEEIGRG…TAADVGEELR (258 aa)). ATP contacts are provided by residues 32–40 (IGRGGFGVV) and lysine 55. Catalysis depends on aspartate 149, which acts as the Proton acceptor. 2 residues coordinate Mg(2+): asparagine 154 and aspartate 167. A phosphothreonine; by autocatalysis mark is found at threonine 179 and threonine 181. Positions 308–343 (RSPEAHAAHRHTGGGTPTVPTPPTPATKYRPSVPTG) are disordered.

The protein belongs to the protein kinase superfamily. Ser/Thr protein kinase family. Forms oligomeric complexes in solution. Post-translationally, can autophosphorylate the carboxyl terminal region in addition to Thr-179 and Thr-181.

Its subcellular location is the cytoplasm. The protein localises to the cell membrane. It is found in the secreted. It localises to the cell wall. It carries out the reaction L-seryl-[protein] + ATP = O-phospho-L-seryl-[protein] + ADP + H(+). The enzyme catalyses L-threonyl-[protein] + ATP = O-phospho-L-threonyl-[protein] + ADP + H(+). Key microbial factor involved in regulation of early and late events in tuberculosis infection, and in host-pathogen interactions. This chain is Serine/threonine-protein kinase PknK (pknK), found in Mycobacterium tuberculosis (strain CDC 1551 / Oshkosh).